The sequence spans 183 residues: Der GTPase-activating protein YihI (183 aa).

A disordered region spans residues 1–101; the sequence is MSRSKKTRKG…KLTDEQKLLK (101 aa). 2 stretches are compositionally biased toward basic and acidic residues: residues 22 to 46 and 92 to 101; these read KKQD…RHNE and KLTDEQKLLK.

Belongs to the YihI family. In terms of assembly, interacts with Der.

Its function is as follows. A GTPase-activating protein (GAP) that modifies Der/EngA GTPase function. May play a role in ribosome biogenesis. This is Der GTPase-activating protein YihI from Shewanella oneidensis (strain ATCC 700550 / JCM 31522 / CIP 106686 / LMG 19005 / NCIMB 14063 / MR-1).